The sequence spans 353 residues: Photosystem II D2 protein (353 aa).

Threonine 2 carries the post-translational modification N-acetylthreonine. A Phosphothreonine modification is found at threonine 2. The chain crosses the membrane as a helical span at residues 41-61; that stretch reads CAYFALGGWFTGTTFVTSWYT. Histidine 118 lines the chlorophyll a pocket. The helical transmembrane segment at 125–141 threads the bilayer; it reads GFMLRQFELARSVQLRP. Residues glutamine 130 and asparagine 143 each contribute to the pheophytin a site. A helical transmembrane segment spans residues 153–166; the sequence is VFVSVFLIYPLGQS. Histidine 198 contacts chlorophyll a. Residues 208 to 228 traverse the membrane as a helical segment; it reads AALLCAIHGATVENTLFEDGD. A plastoquinone-binding residues include histidine 215 and phenylalanine 262. A Fe cation-binding site is contributed by histidine 215. Fe cation is bound at residue histidine 269. Residues 279–295 form a helical membrane-spanning segment; sequence GLWMSALGVVGLALNLR.

Belongs to the reaction center PufL/M/PsbA/D family. In terms of assembly, PSII is composed of 1 copy each of membrane proteins PsbA, PsbB, PsbC, PsbD, PsbE, PsbF, PsbH, PsbI, PsbJ, PsbK, PsbL, PsbM, PsbT, PsbX, PsbY, PsbZ, Psb30/Ycf12, at least 3 peripheral proteins of the oxygen-evolving complex and a large number of cofactors. It forms dimeric complexes. Requires The D1/D2 heterodimer binds P680, chlorophylls that are the primary electron donor of PSII, and subsequent electron acceptors. It shares a non-heme iron and each subunit binds pheophytin, quinone, additional chlorophylls, carotenoids and lipids. There is also a Cl(-1) ion associated with D1 and D2, which is required for oxygen evolution. The PSII complex binds additional chlorophylls, carotenoids and specific lipids. as cofactor.

The protein resides in the plastid. It is found in the chloroplast thylakoid membrane. The enzyme catalyses 2 a plastoquinone + 4 hnu + 2 H2O = 2 a plastoquinol + O2. Functionally, photosystem II (PSII) is a light-driven water:plastoquinone oxidoreductase that uses light energy to abstract electrons from H(2)O, generating O(2) and a proton gradient subsequently used for ATP formation. It consists of a core antenna complex that captures photons, and an electron transfer chain that converts photonic excitation into a charge separation. The D1/D2 (PsbA/PsbD) reaction center heterodimer binds P680, the primary electron donor of PSII as well as several subsequent electron acceptors. D2 is needed for assembly of a stable PSII complex. The protein is Photosystem II D2 protein of Pelargonium hortorum (Common geranium).